Here is a 300-residue protein sequence, read N- to C-terminus: Metal tolerance protein 12 (300 aa).

At 1-26 (MESPESFSTMFMKPIRHILSEKKSRK) the chain is on the cytoplasmic side. Residues 27–47 (IALFLLINTAYMVVEFVAGFM) traverse the membrane as a helical segment. Topologically, residues 48–50 (SNS) are vacuolar. Residues 51–71 (LGLISDACHMLFDCAALAIGL) traverse the membrane as a helical segment. The Cytoplasmic portion of the chain corresponds to 72 to 91 (YASYISRLPANHQYNYGRGR). Residues 92–112 (FEVLSGYVNAVFLVLVGALIV) traverse the membrane as a helical segment. Topologically, residues 113 to 128 (LESIERILDPQEISTN) are vacuolar. Residues 129–149 (SLLVVSVGGLLVNIVGLIFFH) form a helical membrane-spanning segment. Residues 150 to 160 (EEHHHAHGGSG) lie on the Cytoplasmic side of the membrane. A helical membrane pass occupies residues 161-181 (IFLHVLADTMGSVGVVISTLL). Residues 182-186 (IKYKG) lie on the Vacuolar side of the membrane. Residues 187–207 (WLVADPASSIFISILIIASVI) traverse the membrane as a helical segment. The Cytoplasmic segment spans residues 208–300 (PLLRNSAEIL…WTLQVESVNS (93 aa)).

This sequence belongs to the cation diffusion facilitator (CDF) transporter (TC 2.A.4) family. SLC30A subfamily.

The protein resides in the vacuole membrane. Involved in sequestration of excess metal in the cytoplasm into vacuoles to maintain metal homeostasis. This is Metal tolerance protein 12 (MTP12) from Arabidopsis thaliana (Mouse-ear cress).